A 1131-amino-acid polypeptide reads, in one-letter code: PolyA-specific ribonuclease subunit panl-2 (1131 aa).

Residues 489-864 (VTMQSTHGMN…LPALLAYKKK (376 aa)) form the USP domain. Residues 909-1074 (VGLDAEFIKI…VDARYALKLY (166 aa)) form the Exonuclease domain. Over residues 1104 to 1115 (QTSSPLVVSTTR) the composition is skewed to polar residues. Residues 1104 to 1131 (QTSSPLVVSTTRKTPEDTNPADAAPKSV) are disordered.

In Caenorhabditis elegans, this protein is PolyA-specific ribonuclease subunit panl-2.